Consider the following 618-residue polypeptide: Dihydroxy-acid dehydratase (618 aa).

Aspartate 81 is a Mg(2+) binding site. Cysteine 122 is a [2Fe-2S] cluster binding site. Aspartate 123 and lysine 124 together coordinate Mg(2+). Lysine 124 is modified (N6-carboxylysine). Cysteine 195 is a [2Fe-2S] cluster binding site. A Mg(2+)-binding site is contributed by glutamate 491. Serine 517 serves as the catalytic Proton acceptor.

Belongs to the IlvD/Edd family. As to quaternary structure, homodimer. [2Fe-2S] cluster is required as a cofactor. Requires Mg(2+) as cofactor.

The enzyme catalyses (2R)-2,3-dihydroxy-3-methylbutanoate = 3-methyl-2-oxobutanoate + H2O. It catalyses the reaction (2R,3R)-2,3-dihydroxy-3-methylpentanoate = (S)-3-methyl-2-oxopentanoate + H2O. It participates in amino-acid biosynthesis; L-isoleucine biosynthesis; L-isoleucine from 2-oxobutanoate: step 3/4. The protein operates within amino-acid biosynthesis; L-valine biosynthesis; L-valine from pyruvate: step 3/4. Its function is as follows. Functions in the biosynthesis of branched-chain amino acids. Catalyzes the dehydration of (2R,3R)-2,3-dihydroxy-3-methylpentanoate (2,3-dihydroxy-3-methylvalerate) into 2-oxo-3-methylpentanoate (2-oxo-3-methylvalerate) and of (2R)-2,3-dihydroxy-3-methylbutanoate (2,3-dihydroxyisovalerate) into 2-oxo-3-methylbutanoate (2-oxoisovalerate), the penultimate precursor to L-isoleucine and L-valine, respectively. The sequence is that of Dihydroxy-acid dehydratase from Rhodopseudomonas palustris (strain TIE-1).